An 870-amino-acid chain; its full sequence is Radial spoke head 10 homolog B (870 aa).

Over residues Met1 to Ala16 the composition is skewed to basic and acidic residues. Positions Met1–Ala43 are disordered. A compositionally biased stretch (polar residues) spans Arg17–Glu39. 10 MORN repeats span residues Tyr86 to Thr108, Tyr109 to Lys131, Tyr132 to Met154, Tyr155 to Val177, Tyr179 to Thr201, Tyr204 to Ile226, Tyr227 to Glu249, Tyr251 to Ile273, Tyr284 to Met306, and Tyr307 to Val329. Positions Asn674–Pro704 are disordered. Basic and acidic residues predominate over residues His683–Ser692. A compositionally biased stretch (low complexity) spans Ala693–Ser703. The stretch at Lys784 to Arg811 forms a coiled coil. A disordered region spans residues Val840–Lys870.

Interacts with RSPH6A. Does not appear to be part of the axonemal radial spoke complexes 1 or 2.

Its subcellular location is the cytoplasm. The protein resides in the cytoskeleton. It localises to the cilium axoneme. It is found in the cell projection. The protein localises to the cilium. Its subcellular location is the flagellum. May function as part of the axonemal radial spoke complex 3 (RS3). Radial spoke complexes are important for ciliary motility. The polypeptide is Radial spoke head 10 homolog B (RSPH10B) (Homo sapiens (Human)).